The chain runs to 72 residues: Translation initiation factor IF-1 (72 aa).

An S1-like domain is found at 1–72 (MTKEEVLEFP…TKGRITYRFK (72 aa)).

This sequence belongs to the IF-1 family. As to quaternary structure, component of the 30S ribosomal translation pre-initiation complex which assembles on the 30S ribosome in the order IF-2 and IF-3, IF-1 and N-formylmethionyl-tRNA(fMet); mRNA recruitment can occur at any time during PIC assembly.

Its subcellular location is the cytoplasm. Its function is as follows. One of the essential components for the initiation of protein synthesis. Stabilizes the binding of IF-2 and IF-3 on the 30S subunit to which N-formylmethionyl-tRNA(fMet) subsequently binds. Helps modulate mRNA selection, yielding the 30S pre-initiation complex (PIC). Upon addition of the 50S ribosomal subunit IF-1, IF-2 and IF-3 are released leaving the mature 70S translation initiation complex. The polypeptide is Translation initiation factor IF-1 (Agrobacterium fabrum (strain C58 / ATCC 33970) (Agrobacterium tumefaciens (strain C58))).